The following is a 365-amino-acid chain: G-protein coupled receptor 68 (365 aa).

Residues 1–12 (MGNITTENSSLS) are Extracellular-facing. N-linked (GlcNAc...) asparagine glycosylation is found at Asn-3 and Asn-8. The chain crosses the membrane as a helical span at residues 13–49 (CPIDHTIHQTLAPVVYVTVLVVGFPANCLSLYFGYLQ). 2 disulfide bridges follow: Cys-13–Cys-258 and Cys-94–Cys-172. Residues 50 to 53 (IKAR) lie on the Cytoplasmic side of the membrane. A helical transmembrane segment spans residues 54–84 (NELGVYLCNLTIADLFYICSLPFWLQYVLQH). Topologically, residues 85 to 89 (DDWSH) are extracellular. A helical membrane pass occupies residues 90–125 (GDLSCQVCGILLYENIYISVGFLCCISIDRYLAVAH). Residues 126–133 (PFRFHQFR) are Cytoplasmic-facing. A helical membrane pass occupies residues 134-160 (TLKAAVGVSVLIWAKELLTSIYFLNHK). The Extracellular segment spans residues 161 to 176 (EVIEDEDQHRVCFEHY). Positions 161-176 (EVIEDEDQHRVCFEHY) are extracellular loop 2 (ECL2). A helical membrane pass occupies residues 177–214 (PIQAWQRSINYYRFLVGFLFPICLLLASYQGILRAVRR). The Cytoplasmic segment spans residues 215–218 (SHGT). Residues 219-254 (QKSRKDQIQRLVLSTVVIFLACFLPYHVLLLVRSLW) traverse the membrane as a helical segment. The Extracellular segment spans residues 255-260 (ERNCEF). Residues 261–289 (AKSIFNVYHFSLLLTSFNCVADPVLYCFV) form a helical membrane-spanning segment. The Cytoplasmic portion of the chain corresponds to 290–365 (SETTHRDLAR…VGGPSTVGLA (76 aa)).

Belongs to the G-protein coupled receptor 1 family. In terms of tissue distribution, expressed in the lung, testis, heart, brain, spleen, thymus, brown fat, small intestine, colon, peripheral blood leukocytes, macrophages, stomach, ovary and white fat but not in the liver, kidney, and skeletal muscle. Expression in the prostate is weak but detectable. Specifically expressed in endothelial cells of small-diameter resistance arteries.

It localises to the cell membrane. Its activity is regulated as follows. Activated by a network of residues that connects an extracellular-facing cavity to Glu-149, a conserved charged residue buried in the transmembrane core of the receptor. Protonation likely drives conformational changes in extracellular loop 2 (ECL2), which stabilizes movement of transmembrane 3 (TM3) and a series of rearrangements that connect the extracellular-facing cavity to Glu-149, a residue only conserved in proton-sensing G-protein coupled receptors. Activated in an allosteric manner by divalent metal ions at the extracellular surface following the order: Cd(2+) &gt; Co(2+) &gt; Ni(2+) &gt; Zn(2+) &gt; Fe(2+) &gt; Ca(2+) &gt; Mg(2+). Activated by ogerin (ZINC67740571), a selective GPR68 positive allosteric modulator. Inhibited by small molecule GPR68-I, decreasing inflammation in models of colitis. Its function is as follows. Proton-sensing G-protein coupled receptor activated by extracellular pH, which is required to monitor pH changes and generate adaptive reactions. The receptor is almost silent at pH 7.8 but fully activated at pH 6.8. Ligand binding causes a conformation change that triggers signaling via guanine nucleotide-binding proteins (G proteins) and modulates the activity of downstream effectors, such as phospholipase C. GPR68 is mainly coupled to G(q) G proteins and mediates production of diacylglycerol (DAG) and inositol 1,4,5-trisphosphate (IP3). Acts as a key mechanosensor of fluid shear stress and membrane stretch. Expressed in endothelial cells of small-diameter resistance arteries, where it mediates flow-induced dilation in response to shear stress. May represents an osteoblastic pH sensor regulating cell-mediated responses to acidosis in bone. Acts as a regulator of calcium-sensing receptor CASR in a seesaw manner: GPR68-mediated signaling inhibits CASR signaling in response to protons, while CASR inhibits GPR68 in presence of extracellular calcium. Also functions as a metastasis suppressor gene in prostate cancer. The sequence is that of G-protein coupled receptor 68 from Mus musculus (Mouse).